Consider the following 413-residue polypeptide: Acyltransferase mokF (413 aa).

Arg93 contacts monacolin J. The active-site Acyl-ester intermediate is the Ser96. The monacolin J site is built by Arg193, Tyr208, and Tyr278. Gly386 is a 2-methylbutanoate binding site.

Belongs to the class-A beta-lactamase family.

The enzyme catalyses monacolin J carboxylate + (S)-2-methylbutanoyl-[2-methylbutanoate polyketide synthase] = lovastatin carboxylate + holo-[2-methylbutanoate polyketide synthase]. It functions in the pathway polyketide biosynthesis; lovastatin biosynthesis. Its function is as follows. Acyltransferase; part of the gene cluster that mediates the biosynthesis of monakolin K, also known as lovastatin, and which acts as a potent competitive inhibitor of HMG-CoA reductase. Monakolin K biosynthesis is performed in two stages. The first stage is catalyzed by the nonaketide synthase mokA, which belongs to type I polyketide synthases and catalyzes the iterative nine-step formation of the polyketide. This PKS stage is completed by the action of dehydrogenase mokE, which catalyzes the NADPH-dependent reduction of the unsaturated tetra-, penta- and heptaketide intermediates that arise during the mokA-mediated biosynthesis of the nonaketide chain and leads to dihydromonacolin L. Covalently bound dihydromonacolin L is released from mokA by the mokD esterase. Conversion of dihydromonacolin L into monacolin L and then monacolin J is subsequently performed with the participation of molecular oxygen and P450 monoogygenase mokC. Finally, mokF performs the conversion of monacoline J to monacoline K through the addition of the side-chain diketide moiety (2R)-2-methylbutanoate produced by the diketide synthase mokB. In Monascus pilosus (Red mold), this protein is Acyltransferase mokF.